The chain runs to 214 residues: Melanoregulin (214 aa).

The short motif at 162-172 is the Cholesterol-binding sequence motif element; it reads LSERYLLVVDR. Ser-213 is modified (phosphoserine).

This sequence belongs to the melanoregulin family. As to quaternary structure, identified in a complex with RILP and DCTN1; interacts directly with RILP, but does not interact directly with DCTN1. Interacts with PRPH2. In terms of processing, palmitoylated. Palmitoylation is required to maintain the protein at the melanosome membrane. As to expression, detected in melanocytes. Expressed in retina, in retinal pigment epithelium (at protein level). Widely expressed with higher expression in skin, heart, liver, testis and thymus. Detected in retina, in retinal pigment epithelium cells.

It localises to the apical cell membrane. The protein resides in the melanosome membrane. It is found in the lysosome membrane. Its subcellular location is the cytoplasmic vesicle membrane. Its function is as follows. Probably functions as a cargo-recognition protein that couples cytoplasmic vesicles to the transport machinery. Plays a role in hair pigmentation, a process that involves shedding of melanosome-containing vesicles from melanocytes, followed by phagocytosis of the melanosome-containing vesicles by keratinocytes. Functions on melanosomes as receptor for RILP and the complex formed by RILP and DCTN1, and thereby contributes to retrograde melanosome transport from the cell periphery to the center. Overexpression causes accumulation of late endosomes and/or lysosomes at the microtubule organising center (MTOC) at the center of the cell. Probably binds cholesterol and requires the presence of cholesterol in membranes to function in microtubule-mediated retrograde organelle transport. Binds phosphatidylinositol 3-phosphate, phosphatidylinositol 4-phosphate, phosphatidylinositol 5-phosphate and phosphatidylinositol 3,5-bisphosphate, but not phosphatidylinositol 3,4-bisphosphate or phosphatidylinositol 4,5-bisphosphate. Required for normal phagosome clearing and normal activation of lysosomal enzymes in lysosomes from retinal pigment epithelium cells. Required for normal degradation of the lipofuscin component N-retinylidene-N-retinylethanolamine (A2E) in the eye. May function in membrane fusion and regulate the biogenesis of disk membranes of photoreceptor rod cells. The polypeptide is Melanoregulin (Mreg) (Mus musculus (Mouse)).